The following is a 110-amino-acid chain: Class I hydrophobin Po.HYD (110 aa).

A signal peptide spans 1 to 27; that stretch reads MFSKATLFFTTVSRYRDTQAPIPTGQT. 4 cysteine pairs are disulfide-bonded: Cys-35/Cys-91, Cys-42/Cys-85, Cys-43/Cys-75, and Cys-92/Cys-105.

The protein belongs to the fungal hydrophobin family. In terms of assembly, self-assembles to form functional amyloid fibrils called rodlets. Self-assembly into fibrillar rodlets occurs spontaneously at hydrophobic:hydrophilic interfaces and the rodlets further associate laterally to form amphipathic monolayers.

Its subcellular location is the secreted. It localises to the cell wall. In terms of biological role, aerial growth, conidiation, and dispersal of filamentous fungi in the environment rely upon a capability of their secreting small amphipathic proteins called hydrophobins (HPBs) with low sequence identity. Class I can self-assemble into an outermost layer of rodlet bundles on aerial cell surfaces, conferring cellular hydrophobicity that supports fungal growth, development and dispersal; whereas Class II form highly ordered films at water-air interfaces through intermolecular interactions but contribute nothing to the rodlet structure. This is Class I hydrophobin Po.HYD from Pleurotus ostreatus (Oyster mushroom).